The primary structure comprises 359 residues: MATH domain and coiled-coil domain-containing protein At2g42475 (359 aa).

The MATH domain occupies 6-128 (KTSFTFEIEN…NDKLIITVEV (123 aa)). Residues 146–337 (EFKELQDLYN…NLELMVLDFK (192 aa)) are a coiled coil.

This chain is MATH domain and coiled-coil domain-containing protein At2g42475, found in Arabidopsis thaliana (Mouse-ear cress).